The chain runs to 716 residues: ATP-dependent zinc metalloprotease FTSH 1, chloroplastic (716 aa).

The transit peptide at 1–48 (MASNSLLRSSSNFFLGSHIIISSPTPKTTRKPSFPFSFVSRAKYQITR) directs the protein to the chloroplast. A thylakoid-targeting transit peptide spans 49–86 (SSQDENSPNGKPNSPFSSQVALAAILLSSISSSPLALA). The chain crosses the membrane as a helical span at residues 204-224 (FTVIGNLIFPLLAFGGLFLLF). 302-309 (GPPGTGKT) contributes to the ATP binding site. Residue histidine 524 coordinates Zn(2+). Residue glutamate 525 is part of the active site. Zn(2+) contacts are provided by histidine 528 and aspartate 605.

It in the N-terminal section; belongs to the AAA ATPase family. The protein in the C-terminal section; belongs to the peptidase M41 family. Interacts with CHIP and HSP70. Heterohexamers with FTSH2, FTSH5 and FTSH8. Zn(2+) is required as a cofactor. Post-translationally, the FTSH1 precursor is ubiquitinated by CHIP in the cytoplasm. In terms of tissue distribution, ubiquitous.

Its subcellular location is the plastid. It localises to the chloroplast thylakoid membrane. Its function is as follows. Part of a complex that function as an ATP-dependent zinc metallopeptidase. Involved in the thylakoid formation and in the removal of damaged D1 in the photosystem II, preventing cell death under high-intensity light conditions. This is ATP-dependent zinc metalloprotease FTSH 1, chloroplastic (FTSH1) from Arabidopsis thaliana (Mouse-ear cress).